Consider the following 649-residue polypeptide: Acetyl-coenzyme A synthetase (649 aa).

Residues 191-194 (RGGR), threonine 309, and asparagine 333 contribute to the CoA site. ATP contacts are provided by residues 385-387 (GEP), 409-414 (DTWWQT), aspartate 498, and arginine 513. CoA is bound at residue serine 521. Position 524 (arginine 524) interacts with ATP. Residues valine 535, histidine 537, and valine 540 each contribute to the Mg(2+) site. Arginine 582 is a CoA binding site. Residue lysine 607 is modified to N6-acetyllysine.

It belongs to the ATP-dependent AMP-binding enzyme family. Mg(2+) is required as a cofactor. Post-translationally, acetylated. Deacetylation by the SIR2-homolog deacetylase activates the enzyme.

The catalysed reaction is acetate + ATP + CoA = acetyl-CoA + AMP + diphosphate. Catalyzes the conversion of acetate into acetyl-CoA (AcCoA), an essential intermediate at the junction of anabolic and catabolic pathways. AcsA undergoes a two-step reaction. In the first half reaction, AcsA combines acetate with ATP to form acetyl-adenylate (AcAMP) intermediate. In the second half reaction, it can then transfer the acetyl group from AcAMP to the sulfhydryl group of CoA, forming the product AcCoA. This chain is Acetyl-coenzyme A synthetase, found in Novosphingobium aromaticivorans (strain ATCC 700278 / DSM 12444 / CCUG 56034 / CIP 105152 / NBRC 16084 / F199).